A 462-amino-acid polypeptide reads, in one-letter code: FAD-dependent monooxygenase opaC (462 aa).

Asn10 carries N-linked (GlcNAc...) asparagine glycosylation. A helical membrane pass occupies residues 14–34 (ITVIIIGLGIGGLTAAISCHL). Asp43 contributes to the FAD binding site. N-linked (GlcNAc...) asparagine glycosylation is present at Asn60. FAD is bound at residue Arg115. Arg193 is a catalytic residue. FAD is bound by residues Asp322 and Ala335.

Belongs to the paxM FAD-dependent monooxygenase family. Requires FAD as cofactor.

Its subcellular location is the membrane. Its pathway is secondary metabolite biosynthesis. In terms of biological role, FAD-dependent monooxygenase; part of the gene cluster that mediates the biosynthesis of oxepinamides, derivatives of anthranilyl-containing tripeptides that share an oxepin ring and a fused pyrimidinone moiety. The nonribosomal peptide synthetase (NRPS) opaA assembles the quinazolinone core with D-Phe incorporation. The first adenylation domain (A1) of opaA loads and activates anthranilic acid whereas the second A domain (A2) is for activating of L-Phe, which is then converted to D-form by the E domain. The third A domain (A3) is responsible for L-Ile activation and the terminal condensation domain C3 for cyclization and releasing the NRPS product protuboxepin K. The cytochrome P450 monooxygenase opaB then catalyzes alone the oxepin ring formation to convert protuboxepin K into protuboxepin A. The flavoenzyme opaC installs subsequently one hydroxyl group at the oxepin ring, accompanied by double bond migration, to form 15-epi-oxepinamide E. The epimerase opaE changes the D-Phe residue back to L-form, leading to oxepinamide E, which is further methylated at the hydroxyl group at C-12 by the O-methyltransferase OpaF to yield oxepinamide F. This is FAD-dependent monooxygenase opaC from Aspergillus ustus.